The following is a 198-amino-acid chain: Thymidine kinase (198 aa).

ATP is bound by residues 15–22 (GCMFSGKT) and 87–90 (DEAQ). Residue Glu88 is the Proton acceptor of the active site. The Zn(2+) site is built by Cys144, Cys147, Cys182, and His185.

This sequence belongs to the thymidine kinase family. As to quaternary structure, homotetramer.

The protein resides in the cytoplasm. It catalyses the reaction thymidine + ATP = dTMP + ADP + H(+). In Coprothermobacter proteolyticus (strain ATCC 35245 / DSM 5265 / OCM 4 / BT), this protein is Thymidine kinase.